Here is a 313-residue protein sequence, read N- to C-terminus: Hydroxyphenylpyruvate reductase (313 aa).

NADP(+) contacts are provided by residues 152 to 155, 174 to 176, and Ile230; these read LGRI and SRS. Residue Arg232 is part of the active site. Residue Asp256 participates in NADP(+) binding. Glu261 is a catalytic residue. The active-site Proton donor is His279.

The protein belongs to the D-isomer specific 2-hydroxyacid dehydrogenase family.

It carries out the reaction (2R)-2-hydroxy-3-(4-hydroxyphenyl)propanoate + NAD(+) = 3-(4-hydroxyphenyl)pyruvate + NADH + H(+). The enzyme catalyses (2R)-2-hydroxy-3-(4-hydroxyphenyl)propanoate + NADP(+) = 3-(4-hydroxyphenyl)pyruvate + NADPH + H(+). The catalysed reaction is (2R)-3-(3,4-dihydroxyphenyl)lactate + NADP(+) = 3-(3,4-dihydroxyphenyl)pyruvate + NADPH + H(+). It catalyses the reaction (2R)-3-(3,4-dihydroxyphenyl)lactate + NAD(+) = 3-(3,4-dihydroxyphenyl)pyruvate + NADH + H(+). Its function is as follows. Catalyzes the NAD(P)H-dependent reduction of 4-hydroxyphenylpyruvate to 4-hydroxyphenyllactate and 3,4-dihydroxyphenylpyruvate to 3,4-dihydroxyphenyllactate in the biosynthesis of rosmarinic acid. Rosmarinic acid is an ester of caffeic acid and 3,4-dihydroxyphenyllactic acid. NADP is the preferred substrate. In Plectranthus scutellarioides (Coleus), this protein is Hydroxyphenylpyruvate reductase (HPPR).